The following is a 498-amino-acid chain: Polyphosphate:AMP phosphotransferase (498 aa).

2 PPK2 regions span residues 11 to 234 (IDDD…MQAA) and 269 to 491 (LSKE…LEKA).

This sequence belongs to the polyphosphate kinase 2 (PPK2) family. Class II subfamily.

The catalysed reaction is [phosphate](n) + ADP = [phosphate](n+1) + AMP. Functionally, uses inorganic polyphosphate (polyP) as a donor to convert AMP to ADP. Can also convert GMP to GDP, with lower efficiency. The protein is Polyphosphate:AMP phosphotransferase of Pseudomonas syringae pv. tomato (strain ATCC BAA-871 / DC3000).